Here is a 223-residue protein sequence, read N- to C-terminus: Ribosomal RNA small subunit methyltransferase G (223 aa).

3 residues coordinate S-adenosyl-L-methionine: glycine 85, phenylalanine 90, and arginine 154.

This sequence belongs to the methyltransferase superfamily. RNA methyltransferase RsmG family.

The protein resides in the cytoplasm. It catalyses the reaction guanosine(527) in 16S rRNA + S-adenosyl-L-methionine = N(7)-methylguanosine(527) in 16S rRNA + S-adenosyl-L-homocysteine. Functionally, specifically methylates the N7 position of guanine in position 527 of 16S rRNA. This Rhodopseudomonas palustris (strain TIE-1) protein is Ribosomal RNA small subunit methyltransferase G.